A 457-amino-acid chain; its full sequence is Aromatic amino acid transport protein AroP (457 aa).

The Cytoplasmic portion of the chain corresponds to 1–19 (MMEGQQHGEQLKRGLKNRH). Residues 20–40 (IQLIALGGAIGTGLFLGSASV) form a helical membrane-spanning segment. Residues 41–42 (IQ) lie on the Periplasmic side of the membrane. The helical transmembrane segment at 43 to 63 (SAGPGIILGYAIAGFIAFLIM) threads the bilayer. Topologically, residues 64 to 86 (RQLGEMVVEEPVAGSFSHFAYKY) are cytoplasmic. The helical transmembrane segment at 87 to 107 (WGSFAGFASGWNYWVLYVLVA) threads the bilayer. Residues 108–117 (MAELTAVGKY) lie on the Periplasmic side of the membrane. The helical transmembrane segment at 118-138 (IQFWYPEIPTWVSAAVFFVVI) threads the bilayer. Topologically, residues 139-155 (NAINLTNVKVFGEMEFW) are cytoplasmic. A helical membrane pass occupies residues 156-176 (FAIIKVIAVVAMIIFGGWLLF). Residues 177 to 201 (SGNGGPQASVSNLWDQGGFLPHGFT) are Periplasmic-facing. The chain crosses the membrane as a helical span at residues 202–222 (GLVMMMAIIMFSFGGLELVGI). Topologically, residues 223–240 (TAAEADNPEQSIPKATNQ) are cytoplasmic. Residues 241–261 (VIYRILIFYIGSLAVLLSLMP) traverse the membrane as a helical segment. The Periplasmic segment spans residues 262-271 (WTRVTADTSP). The chain crosses the membrane as a helical span at residues 272 to 292 (FVLIFHELGDTFVANALNIVV). At 293–333 (LTAALSVYNSCVYCNSRMLFGLAQQGNAPKALASVDKRGVP) the chain is on the cytoplasmic side. A helical transmembrane segment spans residues 334 to 354 (VNTILVSALVTALCVLINYLA). The Periplasmic segment spans residues 355 to 358 (PESA). A helical membrane pass occupies residues 359-379 (FGLLMALVVSALVINWAMISL). Topologically, residues 380-399 (AHMKFRRAKQEQGVVTRFPA) are cytoplasmic. The chain crosses the membrane as a helical span at residues 400–420 (LLYPLGNWICLLFMAAVLVIM). The Periplasmic segment spans residues 421-425 (LMTPG). A helical transmembrane segment spans residues 426–446 (MAISVYLIPVWLIVLGIGYLF). At 447 to 457 (KEKTAKAVKAH) the chain is on the cytoplasmic side.

The protein belongs to the amino acid-polyamine-organocation (APC) superfamily. Amino acid transporter (AAT) (TC 2.A.3.1) family.

It is found in the cell inner membrane. The catalysed reaction is L-phenylalanine(in) + H(+)(in) = L-phenylalanine(out) + H(+)(out). It catalyses the reaction L-tryptophan(in) + H(+)(in) = L-tryptophan(out) + H(+)(out). It carries out the reaction L-tyrosine(in) + H(+)(in) = L-tyrosine(out) + H(+)(out). In terms of biological role, permease that is involved in the active transport across the cytoplasmic membrane of all three aromatic amino acids, phenylalanine, tyrosine and tryptophan. The chain is Aromatic amino acid transport protein AroP (aroP) from Shigella flexneri.